Consider the following 382-residue polypeptide: Chaperone protein DnaJ (382 aa).

Positions 5 to 70 (DYYEVLGVSR…DKKAAYDRYG (66 aa)) constitute a J domain. Residues 141 to 219 (GVQKTINVPA…CHGAGRVEKE (79 aa)) form a CR-type zinc finger. Zn(2+)-binding residues include C154, C157, C171, C174, C193, C196, C207, and C210. 4 CXXCXGXG motif repeats span residues 154-161 (CDACKGTG), 171-178 (CPTCSGMG), 193-200 (CPTCNGMG), and 207-214 (CKVCHGAG).

This sequence belongs to the DnaJ family. As to quaternary structure, homodimer. The cofactor is Zn(2+).

It is found in the cytoplasm. Its function is as follows. Participates actively in the response to hyperosmotic and heat shock by preventing the aggregation of stress-denatured proteins and by disaggregating proteins, also in an autonomous, DnaK-independent fashion. Unfolded proteins bind initially to DnaJ; upon interaction with the DnaJ-bound protein, DnaK hydrolyzes its bound ATP, resulting in the formation of a stable complex. GrpE releases ADP from DnaK; ATP binding to DnaK triggers the release of the substrate protein, thus completing the reaction cycle. Several rounds of ATP-dependent interactions between DnaJ, DnaK and GrpE are required for fully efficient folding. Also involved, together with DnaK and GrpE, in the DNA replication of plasmids through activation of initiation proteins. In Cereibacter sphaeroides (strain ATCC 17029 / ATH 2.4.9) (Rhodobacter sphaeroides), this protein is Chaperone protein DnaJ.